Reading from the N-terminus, the 243-residue chain is RNA-binding protein with serine-rich domain 1 homolog (243 aa).

Positions 48 to 92 (SSTRQFNNTRSPSGRSASRSSNFSHRSSSRDSFSSNRSYSSSLSR) are disordered. The span at 57–92 (RSPSGRSASRSSNFSHRSSSRDSFSSNRSYSSSLSR) shows a compositional bias: low complexity. Residues 99-177 (RTILVENLTR…EELFVSIKRF (79 aa)) form the RRM domain. A disordered region spans residues 189–243 (YENSYRPSRSQNNSHYNDKSFHRSRYSRARSRSPGSNISEYSDQSPPYHSYRHRP). Residues 193–203 (YRPSRSQNNSH) show a composition bias toward polar residues. Positions 210–219 (HRSRYSRARS) are enriched in basic residues. The segment covering 222 to 235 (PGSNISEYSDQSPP) has biased composition (polar residues).

Belongs to the splicing factor SR family. As to quaternary structure, component of the active spliceosome.

It is found in the cytoplasm. It localises to the nucleus. Functionally, putative component of the spliceosome which enhances the formation of the ATP-dependent A complex of the spliceosome. may participate in mRNA 3'-end cleavage. Also mediates increase of mRNA abundance and translational efficiency. The polypeptide is RNA-binding protein with serine-rich domain 1 homolog (Schizosaccharomyces pombe (strain 972 / ATCC 24843) (Fission yeast)).